The following is a 421-amino-acid chain: eIF5-mimic protein 1 (421 aa).

Residues 1-24 (MNTGKQQKPVLTGQRFKTRKRDEK) form a disordered region. Positions 250–417 (TQQTLGTRKE…QNAEEESESE (168 aa)) constitute a W2 domain.

The protein belongs to the BZW family.

The protein localises to the cytoplasm. Its function is as follows. Translation initiation regulator which may repress non-AUG initiated translation and repeat-associated non-AUG (RAN) initiated translation by acting as a competitive inhibitor of eukaryotic translation initiation factor 5 (EIF5) function. The protein is eIF5-mimic protein 1 (bzw2) of Danio rerio (Zebrafish).